Reading from the N-terminus, the 386-residue chain is Alpha-D-kanosaminyltransferase (386 aa).

Belongs to the glycosyltransferase group 1 family.

The catalysed reaction is 2'-deamino-2'-hydroxyneamine + UDP-alpha-D-kanosamine = kanamycin A + UDP + H(+). It carries out the reaction neamine + UDP-alpha-D-kanosamine = kanamycin B + UDP + H(+). It catalyses the reaction paromamine + UDP-alpha-D-kanosamine = kanamycin C + UDP + H(+). The enzyme catalyses 2'-deamino-2'-hydroxyparomamine + UDP-alpha-D-kanosamine = kanamycin X + UDP + H(+). Its pathway is antibiotic biosynthesis; kanamycin biosynthesis. In terms of biological role, glycosyltransferase involved in the biosynthesis of kanamycins by catalyzing the transfer of the hexose kanosamine from UDP-alpha-D-kanosamine to disaccharide precursors. Can also use UDP-alpha-D-glucose as sugar donor with much lower efficiency. In Streptomyces kanamyceticus, this protein is Alpha-D-kanosaminyltransferase (kanE).